Consider the following 307-residue polypeptide: Protoheme IX farnesyltransferase (307 aa).

9 helical membrane passes run 31 to 51, 55 to 75, 103 to 123, 125 to 145, 153 to 173, 179 to 199, 223 to 243, 246 to 266, and 285 to 305; these read VTQL…PGMV, VLIG…AINC, TLVF…VYAN, LTMW…TILL, IVIG…AVAG, AWFL…ALAL, LLHI…PFVY, SGYI…AYAW, and ILYL…KFVP.

This sequence belongs to the UbiA prenyltransferase family. Protoheme IX farnesyltransferase subfamily.

The protein resides in the cell inner membrane. The catalysed reaction is heme b + (2E,6E)-farnesyl diphosphate + H2O = Fe(II)-heme o + diphosphate. Its pathway is porphyrin-containing compound metabolism; heme O biosynthesis; heme O from protoheme: step 1/1. Functionally, converts heme B (protoheme IX) to heme O by substitution of the vinyl group on carbon 2 of heme B porphyrin ring with a hydroxyethyl farnesyl side group. The polypeptide is Protoheme IX farnesyltransferase (Cupriavidus necator (strain ATCC 17699 / DSM 428 / KCTC 22496 / NCIMB 10442 / H16 / Stanier 337) (Ralstonia eutropha)).